The following is a 292-amino-acid chain: Tetratricopeptide repeat protein 1 (292 aa).

2 stretches are compositionally biased toward basic and acidic residues: residues 1-12 (MEEKSEDCKVPE) and 47-64 (KAAEAHPQDDHVEEECFH). A disordered region spans residues 1–125 (MEEKSEDCKV…SAKLKEEGNE (125 aa)). A compositionally biased stretch (acidic residues) spans 88–98 (SSSELDEEYLI). At serine 90 the chain carries Phosphoserine. The segment covering 99–125 (ELEKNMPEEEKQKRREESAKLKEEGNE) has biased composition (basic and acidic residues). TPR repeat units lie at residues 116 to 149 (SAKLKEEGNERFKRGDYMEAESSYSQALQMCPAC), 155 to 188 (SVLFSNRAAARMKQDKKETAITDCSKAIQLNPTY), and 189 to 222 (IRAILRRAELYEKTDKLDEALEDYKSVLEKDPSV).

Interacts with the GAP domain of NF1. Interacts (via TPR repeats) with HSP90AA1 and HSPA8.

This Mus musculus (Mouse) protein is Tetratricopeptide repeat protein 1 (Ttc1).